Consider the following 584-residue polypeptide: MKERLISLIESALDTLITDGTLPADAKRPVQIDRTRDKSHGDFATNIALMLAKPAGMKPRDLAEKLIAALPNDSAVAKVDIAGPGFINFFQADDWLTGLLDSALADDFLGISRPEQPQTVVVDYSSPNLAKEMHVGHLRSTIIGDAVVRTLEFLGHTVIRQNHVGDWGTQFGMLLAYLEEQKTEEGERELSRELANLETFYRAAKQRFDESDSFADRARALVVKLQSGDDYCLTLWAEFNQVSLSHCQAIYDRLGVSLTPADVHGESAYNDDLAQVVADLDSKGLLSESQGAQCVFMDAFKNKEGEPLPVIVRKADGGYLYATSDLAALRYRASTLRADRMLYFVDQRQALHFQQMFTLAKLAGFVPEQTELAHMGFGTMNGPDGRPFKTRDGGTVKLVDLLDEAEQRAFALVQEKNPQLDDEELRNIARSVGIGAVKYADLSKNRSSDYIFNFEQMLSFEGNTAPYLLYAYTRVASVFRKAELDMANVSGDFLLNEDAEHTLAARLVQFGEVLQNVADKGQPHLLSAYLYDVAGLFSSFYEHCPILSSEDERIRQSRLKLAALTARTLKHGMELLGLSPLERM.

Residues 127–137 carry the 'HIGH' region motif; sequence PNLAKEMHVGH.

It belongs to the class-I aminoacyl-tRNA synthetase family. In terms of assembly, monomer.

The protein localises to the cytoplasm. The catalysed reaction is tRNA(Arg) + L-arginine + ATP = L-arginyl-tRNA(Arg) + AMP + diphosphate. The protein is Arginine--tRNA ligase of Alcanivorax borkumensis (strain ATCC 700651 / DSM 11573 / NCIMB 13689 / SK2).